Here is a 165-residue protein sequence, read N- to C-terminus: Large ribosomal subunit protein uL30 (165 aa).

The protein belongs to the universal ribosomal protein uL30 family. Part of the 50S ribosomal subunit.

This Thermoplasma acidophilum (strain ATCC 25905 / DSM 1728 / JCM 9062 / NBRC 15155 / AMRC-C165) protein is Large ribosomal subunit protein uL30.